The following is a 521-amino-acid chain: Membrane-bound transcription factor site-2 protease (521 aa).

At 1–3 the chain is on the cytoplasmic side; it reads MIP. A helical membrane pass occupies residues 4–24; the sequence is VSLVVVVVGGWTVVYLTDLVL. The Lumenal segment spans residues 25-74; it reads KSSVYFKHSYEDWLESNGLSISPFHIRWQTAVFNRAFYSWGRRKARMLYQ. A run of 2 helical transmembrane segments spans residues 75–95 and 96–107; these read WFNF…FLLG and KTLMQTLAQMMA. Topologically, residues 108–146 are lumenal; sequence DSPSSYSSSSSSSSSSSSSSSSSSSSSSSSSLHNEQVLQ. The interval 113 to 137 is disordered; sequence YSSSSSSSSSSSSSSSSSSSSSSSS. Residues 147 to 171 traverse the membrane as a helical segment; sequence VVVPGINLPVNQLTYFFAAVLISGV. A Zn(2+)-binding site is contributed by H173. Residue E174 is part of the active site. 3 consecutive transmembrane segments (helical) span residues 176–188, 189–211, and 231–253; these read GHGI…QVRF, NGFG…TTHL, and FVLA…PFYY. Residue H177 participates in Zn(2+) binding. The Lumenal portion of the chain corresponds to 254–448; sequence TGVGVLITEV…LPVVVETFVK (195 aa). N339 carries N-linked (GlcNAc...) asparagine glycosylation. 2 consecutive transmembrane segments (helical) span residues 449–466 and 467–478; these read YLIS…VPCF and ALDGQWILNSFL. Topologically, residues 479-494 are lumenal; sequence DATLTSVIGDNDVKDL. Residues 495 to 515 form a helical membrane-spanning segment; that stretch reads IGFFILLGGSVLLAANVTLGL. Residues 516–521 lie on the Cytoplasmic side of the membrane; sequence WMVTAR.

This sequence belongs to the peptidase M50A family. It depends on Zn(2+) as a cofactor.

The protein localises to the membrane. It localises to the cytoplasm. The protein resides in the golgi apparatus membrane. It catalyses the reaction Cleaves several transcription factors that are type-2 transmembrane proteins within membrane-spanning domains. Known substrates include sterol regulatory element-binding protein (SREBP) -1, SREBP-2 and forms of the transcriptional activator ATF6. SREBP-2 is cleaved at the site 477-DRSRILL-|-CVLTFLCLSFNPLTSLLQWGGA-505. The residues Asn-Pro, 11 residues distal to the site of cleavage in the membrane-spanning domain, are important for cleavage by S2P endopeptidase. Replacement of either of these residues does not prevent cleavage, but there is no cleavage if both of these residues are replaced.. Its function is as follows. Zinc metalloprotease that mediates intramembrane proteolysis of proteins such as ATF6, ATF6B, SREBF1/SREBP1 and SREBF2/SREBP2. Catalyzes the second step in the proteolytic activation of the sterol regulatory element-binding proteins (SREBPs) SREBF1/SREBP1 and SREBF2/SREBP2: cleaves SREBPs within the first transmembrane segment, thereby releasing the N-terminal segment with a portion of the transmembrane segment attached. Mature N-terminal SREBP fragments shuttle to the nucleus and activate gene transcription. Also mediates the second step in the proteolytic activation of the cyclic AMP-dependent transcription factor ATF-6 (ATF6 and ATF6B). Involved in intramembrane proteolysis during bone formation. In astrocytes and osteoblasts, upon DNA damage and ER stress, mediates the second step of the regulated intramembrane proteolytic activation of the transcription factor CREB3L1, leading to the inhibition of cell-cycle progression. The polypeptide is Membrane-bound transcription factor site-2 protease (MBTPS2) (Pongo abelii (Sumatran orangutan)).